A 427-amino-acid polypeptide reads, in one-letter code: UDP-N-acetylglucosamine--N-acetylmuramyl-(pentapeptide) pyrophosphoryl-undecaprenol N-acetylglucosamine transferase (427 aa).

Residues 29 to 31 (TGG), Asn141, Arg177, Ser205, Ile258, and Gln303 each bind UDP-N-acetyl-alpha-D-glucosamine. The tract at residues 408–427 (SLHPIPDSRFPIRTSAGGAQ) is disordered.

Belongs to the glycosyltransferase 28 family. MurG subfamily.

The protein localises to the cell inner membrane. The catalysed reaction is di-trans,octa-cis-undecaprenyl diphospho-N-acetyl-alpha-D-muramoyl-L-alanyl-D-glutamyl-meso-2,6-diaminopimeloyl-D-alanyl-D-alanine + UDP-N-acetyl-alpha-D-glucosamine = di-trans,octa-cis-undecaprenyl diphospho-[N-acetyl-alpha-D-glucosaminyl-(1-&gt;4)]-N-acetyl-alpha-D-muramoyl-L-alanyl-D-glutamyl-meso-2,6-diaminopimeloyl-D-alanyl-D-alanine + UDP + H(+). It functions in the pathway cell wall biogenesis; peptidoglycan biosynthesis. Cell wall formation. Catalyzes the transfer of a GlcNAc subunit on undecaprenyl-pyrophosphoryl-MurNAc-pentapeptide (lipid intermediate I) to form undecaprenyl-pyrophosphoryl-MurNAc-(pentapeptide)GlcNAc (lipid intermediate II). This Xanthomonas campestris pv. campestris (strain B100) protein is UDP-N-acetylglucosamine--N-acetylmuramyl-(pentapeptide) pyrophosphoryl-undecaprenol N-acetylglucosamine transferase.